We begin with the raw amino-acid sequence, 995 residues long: Serine-aspartate repeat-containing protein C (995 aa).

The signal sequence occupies residues 1-50 (MNNKKTATNRKGMIPNRLNKFSIRKYSVGTASILVGTTLIFGLSGHEAKA). The YSIRK-G/S signaling motif motif lies at 21–32 (FSIRKYSVGTAS). The disordered stretch occupies residues 51–164 (AEHTNGELNQ…STTPKTTTIK (114 aa)). Residues 51–495 (AEHTNGELNQ…GSSTANGDQK (445 aa)) are ligand binding A region. The span at 56-71 (GELNQSKNETTAPSEN) shows a compositional bias: polar residues. Residues 72-83 (KTTKKVDSRQLK) are compositionally biased toward basic and acidic residues. Residues 84–155 (DNTQTATADQ…SNLTQAKDVS (72 aa)) show a composition bias toward polar residues. CNA-B domains lie at 496–606 (KYNL…YKTP) and 607–717 (KYSL…EEET). Residues 678–975 (TQTGTNTTED…NNSNNGTLFG (298 aa)) form a disordered region. Acidic residues-rich tracts occupy residues 685-695 (TEDDKDADGGE) and 712-934 (YYEE…DSDS). The LPXTG sorting signal motif lies at 958 to 962 (LPETG). Low complexity predominate over residues 960–975 (ETGSENNNSNNGTLFG). At Thr-961 the chain carries Pentaglycyl murein peptidoglycan amidated threonine. A propeptide spans 962-995 (GSENNNSNNGTLFGGLFAALGSLLLFGRRKKQNK) (removed by sortase).

Belongs to the serine-aspartate repeat-containing protein (SDr) family. In terms of assembly, homodimerizes; via N2-Domain. Interacts with host NRXN1; this interaction mediates bacterial attachment to host cells.

It localises to the secreted. It is found in the cell wall. In terms of biological role, cell surface-associated calcium-binding protein which plays an important role in adhesion and pathogenesis. Mediates interactions with components of the extracellular matrix such as host NRXN1 to promote bacterial adhesion. The chain is Serine-aspartate repeat-containing protein C (sdrC) from Staphylococcus aureus (strain NCTC 8325 / PS 47).